We begin with the raw amino-acid sequence, 98 residues long: Leydig cell tumor 10 kDa protein homolog (98 aa).

Disordered stretches follow at residues 1–38 (MAQGQRKFQAQKPAKSKAAAAAASARNRGPRKGGRVIA) and 73–98 (SLPKKLALLKASTKKKEASSSTKMPA). Residues 16–25 (SKAAAAAASA) are compositionally biased toward low complexity. The segment covering 28-38 (RGPRKGGRVIA) has biased composition (basic residues). Over residues 73-83 (SLPKKLALLKA) the composition is skewed to low complexity.

This sequence belongs to the UPF0390 family.

Functionally, may have a potential role in hypercalcemia of malignancy. The protein is Leydig cell tumor 10 kDa protein homolog of Bos taurus (Bovine).